The chain runs to 175 residues: Protein-export protein SecB (175 aa).

A disordered region spans residues 154-175 (QQGGNNNGSDSGIILPPGTTRQ).

This sequence belongs to the SecB family. As to quaternary structure, homotetramer, a dimer of dimers. One homotetramer interacts with 1 SecA dimer.

Its subcellular location is the cytoplasm. In terms of biological role, one of the proteins required for the normal export of preproteins out of the cell cytoplasm. It is a molecular chaperone that binds to a subset of precursor proteins, maintaining them in a translocation-competent state. It also specifically binds to its receptor SecA. The sequence is that of Protein-export protein SecB from Bordetella petrii (strain ATCC BAA-461 / DSM 12804 / CCUG 43448).